The sequence spans 534 residues: Putative fimbrium tip subunit Fim1C (534 aa).

An N-terminal signal peptide occupies residues 1–21 (MKQYKLMQVALLAILLFGWAG). Residue Cys22 is the site of N-palmitoyl cysteine attachment. Cys22 is lipidated: S-diacylglycerol cysteine. Positions 22 to 54 (CSQNEEEVPGNVRNGIVLNVTDTGIISNEPSTR) are excised as a propeptide.

The protein belongs to the bacteroidetes fimbrillin superfamily. Mfa-like family. May be part of the fimbrial tip.

The protein localises to the fimbrium. The protein resides in the cell outer membrane. Probably a component of the fimbrium tip. Fimbriae are filamentous appendages on the cell surface that mediate cell adhesion and biofilm formation. The chain is Putative fimbrium tip subunit Fim1C from Bacteroides ovatus (strain ATCC 8483 / DSM 1896 / JCM 5824 / BCRC 10623 / CCUG 4943 / NCTC 11153).